A 610-amino-acid polypeptide reads, in one-letter code: Elongation factor 4 (610 aa).

The tr-type G domain occupies 12-194 (EKIRNFSIIA…QIVEKVPAPQ (183 aa)). Residues 24-29 (DHGKST) and 141-144 (NKID) each bind GTP.

This sequence belongs to the TRAFAC class translation factor GTPase superfamily. Classic translation factor GTPase family. LepA subfamily.

The protein localises to the cell membrane. The enzyme catalyses GTP + H2O = GDP + phosphate + H(+). In terms of biological role, required for accurate and efficient protein synthesis under certain stress conditions. May act as a fidelity factor of the translation reaction, by catalyzing a one-codon backward translocation of tRNAs on improperly translocated ribosomes. Back-translocation proceeds from a post-translocation (POST) complex to a pre-translocation (PRE) complex, thus giving elongation factor G a second chance to translocate the tRNAs correctly. Binds to ribosomes in a GTP-dependent manner. In Streptococcus thermophilus (strain CNRZ 1066), this protein is Elongation factor 4.